Reading from the N-terminus, the 300-residue chain is Ribosomal protein L11 methyltransferase (300 aa).

S-adenosyl-L-methionine-binding residues include Thr152, Gly173, Asp195, and Asn234.

The protein belongs to the methyltransferase superfamily. PrmA family.

The protein resides in the cytoplasm. It carries out the reaction L-lysyl-[protein] + 3 S-adenosyl-L-methionine = N(6),N(6),N(6)-trimethyl-L-lysyl-[protein] + 3 S-adenosyl-L-homocysteine + 3 H(+). Functionally, methylates ribosomal protein L11. This Burkholderia cenocepacia (strain HI2424) protein is Ribosomal protein L11 methyltransferase.